An 889-amino-acid polypeptide reads, in one-letter code: F-BAR domain only protein 1 (889 aa).

The 248-residue stretch at 1 to 248 folds into the F-BAR domain; the sequence is MSYFGEHFWG…NIENVSVEML (248 aa). Residues 1–275 are mediates membrane-binding; it reads MSYFGEHFWG…LDFEAYSAAA (275 aa). A coiled-coil region spans residues 156–195; that stretch reads TSQKEMDKAETKTKKAAESLRRSVEKYNSARADFEQKMLD. A mediates interaction with the adaptor protein complex AP-2 region spans residues 267–442; it reads DFEAYSAAAL…KNLFGPPLES (176 aa). The interval 294 to 352 is disordered; that stretch reads LSRREREPEPPAAVDFLEPDSGTCPEVDEEGFTVRPDVTQNSTAEPSRFSSSDSDFDDE. Phosphoserine is present on residues Ser295, Ser347, and Ser372. The tract at residues 382–596 is disordered; sequence ATAGSLILPP…SPLGSSAAST (215 aa). The segment covering 450 to 469 has biased composition (low complexity); that stretch reads TGSSSLGFTSSPSPFSSSSP. Over residues 496–511 the composition is skewed to pro residues; sequence PGTPQSPPSCRAPPPE. Ser530 is modified (phosphoserine). The span at 580 to 596 shows a compositional bias: low complexity; sequence LSRSLSPSPLGSSAAST. The interval 609–889 is mediates interaction with AGFG1, CALM, DAB2, EPS15, EPS15R, ITSN1 and clathrin; the sequence is HGVSRGPSPV…FATGMYLVSC (281 aa). Ser616 carries the phosphoserine modification. One can recognise an MHD domain in the interval 625-888; it reads ALPIATAFTE…RFATGMYLVS (264 aa). Residues 826–849 form a disordered region; the sequence is AGGSGRLSASWEPLSGPSTPSPVA.

The protein belongs to the FCHO family. As to quaternary structure, may oligomerize and form homotetramer. Interacts with AP2A2 and AP2B1; 2 subunits of the adaptor protein complex AP-2. Interacts with DAB2. Interacts with clathrin (CLTC or CLTCL1). Interacts with EPS15, EPS15R and ITSN1. Interacts with AGFG1 and CALM. May interact with ACVR1; linking this receptor to clathrin-mediated endocytosis. Predominantly expressed in lymphoid cells.

The protein resides in the membrane. Its subcellular location is the clathrin-coated pit. Its function is as follows. Functions in an early step of clathrin-mediated endocytosis. Has both a membrane binding/bending activity and the ability to recruit proteins essential to the formation of functional clathrin-coated pits. May regulate Bmp signaling by regulating clathrin-mediated endocytosis of Bmp receptors. Involved in the regulation of T-cell poliferation and activation. Affects TCR clustering upon receptor triggering and modulates its internalisation, playing a role in TCR-dependent T-cell activation. This chain is F-BAR domain only protein 1, found in Homo sapiens (Human).